The following is a 52-amino-acid chain: UPF0181 protein VPA0916 (52 aa).

Belongs to the UPF0181 family.

This is UPF0181 protein VPA0916 from Vibrio parahaemolyticus serotype O3:K6 (strain RIMD 2210633).